A 179-amino-acid polypeptide reads, in one-letter code: Large ribosomal subunit protein uL16 (179 aa).

The disordered stretch occupies residues 147–179 (KASSASLANLDEDANSQTDDETSSSGSVATVES). A compositionally biased stretch (acidic residues) spans 156 to 168 (LDEDANSQTDDET). A compositionally biased stretch (polar residues) spans 169–179 (SSSGSVATVES).

The protein belongs to the universal ribosomal protein uL16 family. Part of the 50S ribosomal subunit.

Binds 23S rRNA and is also seen to make contacts with the A and possibly P site tRNAs. The chain is Large ribosomal subunit protein uL16 from Prochlorococcus marinus (strain MIT 9211).